The sequence spans 617 residues: Secretogranin-2 (617 aa).

The signal sequence occupies residues 1-27 (MAEAKTHWLGAALSLIPLIFLISGAEA). Positions 28 to 30 (ASF) are excised as a propeptide. The tract at residues 120–143 (QAENEPQSAPKENKPYALNSEKNF) is disordered. At Y151 the chain carries Sulfotyrosine. Residue S174 is modified to Phosphoserine. The interval 182-200 (TNEIVEEQYTPQSLATLES) is O-glycosylated at one site. 2 stretches are compositionally biased toward basic and acidic residues: residues 257–284 (IESQ…EMKR) and 293–302 (EDLRKESKDQ). A disordered region spans residues 257–302 (IESQTQEEVRDSKENIEKNEQINDEMKRSGQLGIQEEDLRKESKDQ). The residue at position 268 (S268) is a Phosphoserine. Phosphoserine occurs at positions 432, 532, 555, and 556. The segment at 552-583 (NQGSSQETDKLAPVSKRFPVGPPKNDDTPNRQ) is disordered.

It belongs to the chromogranin/secretogranin protein family. As to quaternary structure, interacts with Secretogranin III/SCG3. O-glycosylated.

It is found in the secreted. Neuroendocrine protein of the granin family that regulates the biogenesis of secretory granules. The chain is Secretogranin-2 (SCG2) from Homo sapiens (Human).